The sequence spans 123 residues: MIQEQTMLTVADNSGARRVMCIKVLGGSHRRYAGVGDIIKITIKEAIPRGKVKKGDVLKAVVVRTKKGVRRPDGSVVRFDGNACVLLNNNSEQPIGTRIFGPVTRELRTEKFMKIISLAPEVL.

This sequence belongs to the universal ribosomal protein uL14 family. Part of the 50S ribosomal subunit. Forms a cluster with proteins L3 and L19. In the 70S ribosome, L14 and L19 interact and together make contacts with the 16S rRNA in bridges B5 and B8.

Its function is as follows. Binds to 23S rRNA. Forms part of two intersubunit bridges in the 70S ribosome. The chain is Large ribosomal subunit protein uL14 from Sodalis glossinidius (strain morsitans).